The sequence spans 423 residues: Gamma-glutamyl phosphate reductase (423 aa).

Belongs to the gamma-glutamyl phosphate reductase family.

The protein resides in the cytoplasm. The enzyme catalyses L-glutamate 5-semialdehyde + phosphate + NADP(+) = L-glutamyl 5-phosphate + NADPH + H(+). It functions in the pathway amino-acid biosynthesis; L-proline biosynthesis; L-glutamate 5-semialdehyde from L-glutamate: step 2/2. In terms of biological role, catalyzes the NADPH-dependent reduction of L-glutamate 5-phosphate into L-glutamate 5-semialdehyde and phosphate. The product spontaneously undergoes cyclization to form 1-pyrroline-5-carboxylate. The protein is Gamma-glutamyl phosphate reductase of Burkholderia ambifaria (strain ATCC BAA-244 / DSM 16087 / CCUG 44356 / LMG 19182 / AMMD) (Burkholderia cepacia (strain AMMD)).